A 637-amino-acid polypeptide reads, in one-letter code: Probable ATP-binding protein YheS (637 aa).

ABC transporter domains follow at residues Ile2–Gln246 and Leu313–Asn527. ATP contacts are provided by residues Gly34–Ser41 and Gly345–Ser352. The disordered stretch occupies residues Gln523–Pro559. The span at Ala542–Leu553 shows a compositional bias: basic and acidic residues.

This sequence belongs to the ABC transporter superfamily. ABCF family. YheS subfamily.

Functionally, genetic data indicate it may be involved in ribosome assembly or function. The chain is Probable ATP-binding protein YheS (yheS) from Escherichia coli O157:H7.